The chain runs to 34 residues: Photosystem II reaction center protein Psb30 (34 aa).

The helical transmembrane segment at 6 to 26 (VIGQLVSTGLIGLLGPAVIIL) threads the bilayer.

The protein belongs to the Psb30/Ycf12 family. In terms of assembly, PSII is composed of 1 copy each of membrane proteins PsbA, PsbB, PsbC, PsbD, PsbE, PsbF, PsbH, PsbI, PsbJ, PsbK, PsbL, PsbM, PsbT, PsbX, PsbY, PsbZ, Psb30/Ycf12, peripheral proteins of the oxygen-evolving complex and a large number of cofactors. It forms dimeric complexes.

Its subcellular location is the plastid. It is found in the chloroplast thylakoid membrane. Its function is as follows. A core subunit of photosystem II (PSII), probably helps stabilize the reaction center. This chain is Photosystem II reaction center protein Psb30, found in Skeletonema costatum (Marine centric diatom).